The primary structure comprises 706 residues: Polyribonucleotide nucleotidyltransferase (706 aa).

Residues D486 and D492 each coordinate Mg(2+). Positions 553-612 constitute a KH domain; the sequence is PRIHTIKISTDKIKDVIGKGGSVIRALTEETGTTIEIEDDGTVRIASTDGEKAKHAIRRI. Residues 622–690 enclose the S1 motif domain; sequence GRVYQGKVTR…RQGRVRLSIK (69 aa).

Belongs to the polyribonucleotide nucleotidyltransferase family. As to quaternary structure, component of the RNA degradosome, which is a multiprotein complex involved in RNA processing and mRNA degradation. Requires Mg(2+) as cofactor.

Its subcellular location is the cytoplasm. It catalyses the reaction RNA(n+1) + phosphate = RNA(n) + a ribonucleoside 5'-diphosphate. Its function is as follows. Involved in mRNA degradation. Catalyzes the phosphorolysis of single-stranded polyribonucleotides processively in the 3'- to 5'-direction. The polypeptide is Polyribonucleotide nucleotidyltransferase (Pectobacterium atrosepticum (strain SCRI 1043 / ATCC BAA-672) (Erwinia carotovora subsp. atroseptica)).